The sequence spans 342 residues: Phosphoribosylformylglycinamidine cyclo-ligase (342 aa).

This sequence belongs to the AIR synthase family.

It is found in the cytoplasm. It carries out the reaction 2-formamido-N(1)-(5-O-phospho-beta-D-ribosyl)acetamidine + ATP = 5-amino-1-(5-phospho-beta-D-ribosyl)imidazole + ADP + phosphate + H(+). It functions in the pathway purine metabolism; IMP biosynthesis via de novo pathway; 5-amino-1-(5-phospho-D-ribosyl)imidazole from N(2)-formyl-N(1)-(5-phospho-D-ribosyl)glycinamide: step 2/2. The sequence is that of Phosphoribosylformylglycinamidine cyclo-ligase from Staphylococcus aureus (strain USA300).